A 270-amino-acid chain; its full sequence is Pantoate kinase (270 aa).

This sequence belongs to the GHMP kinase family. PoK subfamily.

The catalysed reaction is (R)-pantoate + ATP = (R)-4-phosphopantoate + ADP + H(+). It functions in the pathway cofactor biosynthesis; coenzyme A biosynthesis. Its function is as follows. Phosphorylates (R)-pantoate to form (R)-4-phosphopantoate in the CoA biosynthesis pathway. The polypeptide is Pantoate kinase (Methanocaldococcus jannaschii (strain ATCC 43067 / DSM 2661 / JAL-1 / JCM 10045 / NBRC 100440) (Methanococcus jannaschii)).